The following is a 741-amino-acid chain: Moderate conductance mechanosensitive channel YbiO (741 aa).

The signal sequence occupies residues 1–18 (MRWILFILFCLLGAPAHA). A disordered region spans residues 22–42 (PGVTTTTTTDSTTEPAPEPDI). The segment covering 25 to 34 (TTTTTTDSTT) has biased composition (low complexity). Helical transmembrane passes span 143-163 (MLAV…LPLY), 185-205 (AMII…LFVG), 225-245 (LFLN…LIFC), 268-288 (LSWL…IISN), 294-314 (IGAL…LYLI), 343-363 (FALV…FFSL), 372-392 (FMMG…FVSG), 432-452 (ILTV…FDFW), 466-486 (ILIR…VLAS), 509-529 (LLTL…IMIV), and 533-553 (IGVN…AISF).

This sequence belongs to the MscS (TC 1.A.23) family. As to quaternary structure, homoheptamer.

Its subcellular location is the cell inner membrane. In terms of biological role, mechanosensitive channel that protects cells against hypoosmotic stress when highly overexpressed. This Escherichia coli (strain K12) protein is Moderate conductance mechanosensitive channel YbiO (ybiO).